The sequence spans 114 residues: Probable 4-amino-4-deoxy-L-arabinose-phosphoundecaprenol flippase subunit ArnE (114 aa).

3 consecutive transmembrane segments (helical) span residues 41-61, 64-84, and 94-114; these read PWLI…IYLL, LPLS…LVGS, and YHNW…GGLL. The 70-residue stretch at 43–112 folds into the EamA domain; the sequence is LIASVAALGC…IIVGALLLGG (70 aa).

It belongs to the ArnE family. In terms of assembly, heterodimer of ArnE and ArnF.

The protein resides in the cell inner membrane. It participates in bacterial outer membrane biogenesis; lipopolysaccharide biosynthesis. In terms of biological role, translocates 4-amino-4-deoxy-L-arabinose-phosphoundecaprenol (alpha-L-Ara4N-phosphoundecaprenol) from the cytoplasmic to the periplasmic side of the inner membrane. The polypeptide is Probable 4-amino-4-deoxy-L-arabinose-phosphoundecaprenol flippase subunit ArnE (Aeromonas hydrophila subsp. hydrophila (strain ATCC 7966 / DSM 30187 / BCRC 13018 / CCUG 14551 / JCM 1027 / KCTC 2358 / NCIMB 9240 / NCTC 8049)).